The chain runs to 278 residues: Large ribosomal subunit protein uL2 (278 aa).

Residues 214 to 278 are disordered; it reads WLGKRPHNRG…IMRSRHQRKS (65 aa).

It belongs to the universal ribosomal protein uL2 family. In terms of assembly, part of the 50S ribosomal subunit. Forms a bridge to the 30S subunit in the 70S ribosome.

Its function is as follows. One of the primary rRNA binding proteins. Required for association of the 30S and 50S subunits to form the 70S ribosome, for tRNA binding and peptide bond formation. It has been suggested to have peptidyltransferase activity; this is somewhat controversial. Makes several contacts with the 16S rRNA in the 70S ribosome. The chain is Large ribosomal subunit protein uL2 from Chelativorans sp. (strain BNC1).